The primary structure comprises 401 residues: L-rhamnonate dehydratase (401 aa).

His29 and Arg55 together coordinate substrate. Mg(2+)-binding residues include Asp222, Glu248, and Glu276. His325 serves as the catalytic Proton acceptor. Glu345 lines the substrate pocket.

The protein belongs to the mandelate racemase/muconate lactonizing enzyme family. RhamD subfamily. In terms of assembly, homooctamer; tetramer of dimers. Requires Mg(2+) as cofactor.

It catalyses the reaction L-rhamnonate = 2-dehydro-3-deoxy-L-rhamnonate + H2O. In terms of biological role, catalyzes the dehydration of L-rhamnonate to 2-keto-3-deoxy-L-rhamnonate (KDR). This is L-rhamnonate dehydratase from Salmonella heidelberg (strain SL476).